A 442-amino-acid polypeptide reads, in one-letter code: 3-phosphoshikimate 1-carboxyvinyltransferase (442 aa).

Positions 25, 26, and 30 each coordinate 3-phosphoshikimate. Residue Lys25 coordinates phosphoenolpyruvate. Gly97 and Arg125 together coordinate phosphoenolpyruvate. Ser170, Gln172, Asp323, and Lys350 together coordinate 3-phosphoshikimate. Gln172 is a phosphoenolpyruvate binding site. The active-site Proton acceptor is the Asp323. Phosphoenolpyruvate is bound by residues Arg354 and Arg399.

This sequence belongs to the EPSP synthase family. In terms of assembly, monomer.

It is found in the cytoplasm. The enzyme catalyses 3-phosphoshikimate + phosphoenolpyruvate = 5-O-(1-carboxyvinyl)-3-phosphoshikimate + phosphate. It functions in the pathway metabolic intermediate biosynthesis; chorismate biosynthesis; chorismate from D-erythrose 4-phosphate and phosphoenolpyruvate: step 6/7. Its function is as follows. Catalyzes the transfer of the enolpyruvyl moiety of phosphoenolpyruvate (PEP) to the 5-hydroxyl of shikimate-3-phosphate (S3P) to produce enolpyruvyl shikimate-3-phosphate and inorganic phosphate. The protein is 3-phosphoshikimate 1-carboxyvinyltransferase of Bartonella henselae (strain ATCC 49882 / DSM 28221 / CCUG 30454 / Houston 1) (Rochalimaea henselae).